Reading from the N-terminus, the 176-residue chain is Translation initiation factor IF-3 (176 aa).

The protein belongs to the IF-3 family. As to quaternary structure, monomer.

It localises to the cytoplasm. Its function is as follows. IF-3 binds to the 30S ribosomal subunit and shifts the equilibrium between 70S ribosomes and their 50S and 30S subunits in favor of the free subunits, thus enhancing the availability of 30S subunits on which protein synthesis initiation begins. This Streptococcus thermophilus (strain ATCC BAA-491 / LMD-9) protein is Translation initiation factor IF-3.